We begin with the raw amino-acid sequence, 608 residues long: Translation initiation factor RLI1 (608 aa).

4Fe-4S ferredoxin-type domains are found at residues 7 to 39 (RIAI…KLCI) and 46 to 75 (KIAF…IINL). 2 ABC transporter domains span residues 70-320 (IQII…FLDG) and 345-568 (LQND…LKNL). ATP is bound at residue 110 to 117 (GTNGIGKS). Serine 349 carries the phosphoserine modification. An ATP-binding site is contributed by 385–392 (GENGTGKT).

It belongs to the ABC transporter superfamily. ABCE family. Component of the multifactor complex (MFC) composed of at least RLI1, the eIF2 subunit SUI2, TIF5/eIF5, and the eIF3 subunits PRT1, HCR1, NIP1, RPG1, TIF34 and TIF35. The complex associates with pre-initiation complexes. Interacts with the complex YAE1:LTO1; the complex bridges the interaction between the CIA complex and RLI1.

Its subcellular location is the cytoplasm. The protein localises to the nucleus. In terms of biological role, component of the multifactor complex (MFC) involved in translation initiation. Required for the binding of MFC to the 40S ribosome. Required for the processing and nuclear export of the 60S and 40S ribosomal subunits. The protein is Translation initiation factor RLI1 (RLI1) of Saccharomyces cerevisiae (strain ATCC 204508 / S288c) (Baker's yeast).